The following is a 218-amino-acid chain: GTP cyclohydrolase 1 (218 aa).

Residues Cys109, His112, and Cys180 each coordinate Zn(2+).

The protein belongs to the GTP cyclohydrolase I family. Toroid-shaped homodecamer, composed of two pentamers of five dimers.

It carries out the reaction GTP + H2O = 7,8-dihydroneopterin 3'-triphosphate + formate + H(+). Its pathway is cofactor biosynthesis; 7,8-dihydroneopterin triphosphate biosynthesis; 7,8-dihydroneopterin triphosphate from GTP: step 1/1. The polypeptide is GTP cyclohydrolase 1 (folE) (Haemophilus influenzae (strain ATCC 51907 / DSM 11121 / KW20 / Rd)).